The chain runs to 149 residues: VapC ribonuclease PF0355 (149 aa).

Positions 8–122 (TFDSLALIKM…ITDDSKRYEP (115 aa)) constitute a PINc domain. Positions 10 and 98 each coordinate Mg(2+).

This sequence belongs to the PINc/VapC protein family. The cofactor is Mg(2+).

Toxic component of a type II toxin-antitoxin (TA) system. An RNase. The polypeptide is VapC ribonuclease PF0355 (Pyrococcus furiosus (strain ATCC 43587 / DSM 3638 / JCM 8422 / Vc1)).